Consider the following 299-residue polypeptide: Sulfate adenylyltransferase subunit 2 (299 aa).

The protein belongs to the PAPS reductase family. CysD subfamily. In terms of assembly, heterodimer composed of CysD, the smaller subunit, and CysN.

It catalyses the reaction sulfate + ATP + H(+) = adenosine 5'-phosphosulfate + diphosphate. The protein operates within sulfur metabolism; hydrogen sulfide biosynthesis; sulfite from sulfate: step 1/3. With CysN forms the ATP sulfurylase (ATPS) that catalyzes the adenylation of sulfate producing adenosine 5'-phosphosulfate (APS) and diphosphate, the first enzymatic step in sulfur assimilation pathway. APS synthesis involves the formation of a high-energy phosphoric-sulfuric acid anhydride bond driven by GTP hydrolysis by CysN coupled to ATP hydrolysis by CysD. This Colwellia psychrerythraea (strain 34H / ATCC BAA-681) (Vibrio psychroerythus) protein is Sulfate adenylyltransferase subunit 2.